The primary structure comprises 429 residues: MAGSGAWKRLKSMLRKDDAPLFLNDTSAFDFSDEVGDEGLSRFNKLRVVVADDGSEAPERPANGAHSALQADDDSLLDQDLPLTNSQLSLKADPCDNCSKQRELLKQRKVKTRLTIAAVLYLLFMIGELVGGYIANSLAIMTDALHMLTDLSAIILTLLALWLSSKSPTKRFTFGFHRLEVLSAMISVLLVYILMGFLLYEAVQRTIHMKYEINGDIMLITAAIGVAVNVIMGFLLNQSGHHHAHSHSLPSNSPTTGPRCGHNQGQDSLAVRAAFVHALGDLVQSVGVLIAAYIIRFKPEYRIADPICTYVFSLLVAFTTFRIIWDTVVIILEGVPSHLNVDYIKEALMKIEDVHSVEDLNIWSLTSGKPTAIVHIQLIPGSSSKWEEVQSKAKHLLLNTFGMYKCTIQLQSYRQEVNRTCANCQSSSS.

Residues 1–113 are Cytoplasmic-facing; it reads MAGSGAWKRL…LLKQRKVKTR (113 aa). Residues 114-134 traverse the membrane as a helical segment; that stretch reads LTIAAVLYLLFMIGELVGGYI. Over 135–143 the chain is Lumenal; that stretch reads ANSLAIMTD. A helical transmembrane segment spans residues 144 to 164; the sequence is ALHMLTDLSAIILTLLALWLS. Histidine 146 and aspartate 150 together coordinate Zn(2+). Residues 165–178 lie on the Cytoplasmic side of the membrane; it reads SKSPTKRFTFGFHR. Residues 179-199 traverse the membrane as a helical segment; it reads LEVLSAMISVLLVYILMGFLL. Over 200 to 216 the chain is Lumenal; it reads YEAVQRTIHMKYEINGD. A helical membrane pass occupies residues 217-237; that stretch reads IMLITAAIGVAVNVIMGFLLN. The Cytoplasmic segment spans residues 238–274; it reads QSGHHHAHSHSLPSNSPTTGPRCGHNQGQDSLAVRAA. The zinc binding stretch occupies residues 240–264; that stretch reads GHHHAHSHSLPSNSPTTGPRCGHNQ. A helical transmembrane segment spans residues 275–295; it reads FVHALGDLVQSVGVLIAAYII. Residues histidine 277 and aspartate 281 each contribute to the Zn(2+) site. At 296-310 the chain is on the lumenal side; that stretch reads RFKPEYRIADPICTY. Residues 311-331 form a helical membrane-spanning segment; the sequence is VFSLLVAFTTFRIIWDTVVII. Residues 332 to 429 lie on the Cytoplasmic side of the membrane; that stretch reads LEGVPSHLNV…TCANCQSSSS (98 aa).

Belongs to the cation diffusion facilitator (CDF) transporter (TC 2.A.4) family. SLC30A subfamily. Homodimerization could regulate efficiency for zinc transport. Interacts with TMEM163.

The protein resides in the endosome membrane. It is found in the late endosome membrane. Its subcellular location is the lysosome membrane. It catalyses the reaction Zn(2+)(in) + 2 H(+)(out) = Zn(2+)(out) + 2 H(+)(in). Its function is as follows. Probable proton-coupled zinc ion antiporter mediating zinc import from cytoplasm potentially into the endocytic compartment. Controls zinc deposition in milk. This Bos taurus (Bovine) protein is Probable proton-coupled zinc antiporter SLC30A4.